The primary structure comprises 873 residues: Leucine--tRNA ligase (873 aa).

The short motif at 48–58 (PYPSGKLHMGH) is the 'HIGH' region element. The short motif at 636–640 (KMSKS) is the 'KMSKS' region element. Residue Lys-639 participates in ATP binding.

This sequence belongs to the class-I aminoacyl-tRNA synthetase family.

The protein localises to the cytoplasm. The enzyme catalyses tRNA(Leu) + L-leucine + ATP = L-leucyl-tRNA(Leu) + AMP + diphosphate. The polypeptide is Leucine--tRNA ligase (Cupriavidus metallidurans (strain ATCC 43123 / DSM 2839 / NBRC 102507 / CH34) (Ralstonia metallidurans)).